The primary structure comprises 458 residues: MFNSAEIIETITMIEHEHLDIRATTIGINLMDCISEDIDKLNENIYNKIVDKAGTLVKTAETVSKKYGIPIVTKRVSVTPIGSIIGSAIKNLEQEDAINCCVEVGKTLDKAAKDINIDFIGGYSALVQKGMTKGELALIESIPLMMKETSTVCSSINVASTKAGINLDAVKKMGEIIKETATTTKDALGCAKLVVFANAPEDNPFMAGAFHGVGEGDAVLNVGVSGPGVVRATVARLDNKDIGTVCNEIKKTAYKITRMGELIGREVATDLNIPFGIVDLSLAPTPAPGDSIANILEEIGLERCGTHGTTAALALLNDAVKKGGAMAASYVGGLSGSFIPVSEDAGMIRAVNDGALSIDKLEAMTCVCSVGLDMIAIPGKTPASTISAIIADEMAIGMVNKKTTAVRVIPVPGKDVGDFVEYGGLLGTAPIMPVNEYSSEEFINRGGRIPAPIQSMLN.

Belongs to the UPF0210 family.

The chain is UPF0210 protein Maeo_1412 from Methanococcus aeolicus (strain ATCC BAA-1280 / DSM 17508 / OCM 812 / Nankai-3).